A 434-amino-acid chain; its full sequence is UDP-glucuronate 4-epimerase 2 (434 aa).

2 helical membrane-spanning segments follow: residues 32 to 52 and 91 to 111; these read SVAKLAFWSLVFFGLLFIFFY and GVSVLVTGAAGFVGTHVSAAL. 93 to 124 serves as a coordination point for NAD(+); the sequence is SVLVTGAAGFVGTHVSAALKRRGDGVLGLDNF. Tyr-243 (proton acceptor) is an active-site residue.

It belongs to the NAD(P)-dependent epimerase/dehydratase family. As to quaternary structure, homodimer. As to expression, in roots, leaves, siliques, flowers, pollen and stems.

It localises to the golgi apparatus. The protein resides in the golgi stack membrane. The catalysed reaction is UDP-alpha-D-glucuronate = UDP-alpha-D-galacturonate. Involved in the synthesis of the negatively charged monosaccharide that forms the backbone of pectic cell wall components. This chain is UDP-glucuronate 4-epimerase 2 (GAE2), found in Arabidopsis thaliana (Mouse-ear cress).